Here is a 352-residue protein sequence, read N- to C-terminus: CMP-sialic acid transporter 4 (352 aa).

Topologically, residues 1-51 are cytoplasmic; the sequence is MEYRKIKDEDDHDVASDIESVKGKSHTVASSNIAMATLGVGSSERINWKRK. A helical transmembrane segment spans residues 52–72; it reads GVVTCALTILTSSQAILIVWS. The Lumenal segment spans residues 73 to 81; sequence KRAGKYEYS. The chain crosses the membrane as a helical span at residues 82–102; sequence VTTANFLVGTLKCALSLLALT. Residues 103–124 are Cytoplasmic-facing; it reads RIWKNEGVTDDNRLSTTFDEVK. The chain crosses the membrane as a helical span at residues 125 to 145; sequence VFPIPAALYLFKNLLQYYIFA. Topologically, residues 146–174 are lumenal; the sequence is YVDAPGYQILKNLNIISTGVLYRIILKRK. Residues 175-195 form a helical membrane-spanning segment; the sequence is LSEIQWAGFILLCCGCTTAQL. Over 196-210 the chain is Cytoplasmic; sequence NSNSDRVLQTSLPGW. A helical membrane pass occupies residues 211–231; that stretch reads TMAIVMALLSGFAGVYTEAII. The Lumenal segment spans residues 232–238; it reads KKRPSRN. Residues 239 to 259 traverse the membrane as a helical segment; sequence INVQNFWLYVFGMAFNAVAIV. Residues 260–276 are Cytoplasmic-facing; sequence IQDFDAVANKGFFHGYS. The chain crosses the membrane as a helical span at residues 277-297; it reads FITLLMILNHALSGIAVSMVM. The Lumenal portion of the chain corresponds to 298–313; sequence KYADNIVKVYSTSVAM. The chain crosses the membrane as a helical span at residues 314–334; the sequence is LLTAVVSVFLFNFHLSLAFFL. At 335–352 the chain is on the cytoplasmic side; that stretch reads GSTVVSVSVYLHSAGKLR.

The protein belongs to the nucleotide-sugar transporter family. CMP-Sialate:CMP antiporter (TC 2.A.7.12) subfamily.

It localises to the golgi apparatus membrane. Sugar transporter involved in the transport of CMP-sialic acid from the cytoplasm into the Golgi. Essential protein. The protein is CMP-sialic acid transporter 4 of Arabidopsis thaliana (Mouse-ear cress).